Consider the following 261-residue polypeptide: Ribosome biogenesis protein nsa2 (261 aa).

2 stretches are compositionally biased toward basic and acidic residues: residues 1–36 (MPQN…HKQS) and 66–82 (KQHE…EKDP). Disordered regions lie at residues 1–44 (MPQN…NLRG) and 64–97 (AIKQ…SNPT). Residues 15–22 (GKRLDTEE) carry the Nuclear localization signal motif.

Belongs to the eukaryotic ribosomal protein eS8 family. Ribosome biogenesis protein NSA2 subfamily. As to quaternary structure, component of the pre-66S ribosomal particle. Interacts with nop7 and rrp1. Interacts with rsa4 (via WD repeats).

It is found in the nucleus. It localises to the nucleolus. In terms of biological role, involved in the biogenesis of the 60S ribosomal subunit. May play a part in the quality control of pre-60S particles. The sequence is that of Ribosome biogenesis protein nsa2 (rbg-52) from Neurospora crassa (strain ATCC 24698 / 74-OR23-1A / CBS 708.71 / DSM 1257 / FGSC 987).